The primary structure comprises 389 residues: Na(+)/H(+) antiporter NhaA (389 aa).

11 helical membrane passes run 14-34 (AGGILLLVAVVFAMLMANSPL), 59-79 (LLLWINDGLMALFFLLIGLEV), 95-115 (SLPSFAAIGGMLVPAGIYLLF), 124-144 (AGWAIPAATDIAFALGIMALL), 154-174 (VFLLALAIIDDLGVIVIIALF), 177-197 (SDLSTISLAIASVAILGLVGL), 213-233 (LILWVAVLKSGVHATLAGVII), 261-281 (FLILPVFAFANAGVALGNMSL), 290-310 (IGIALGLILGKPIGVMLFSFI), 328-348 (IAPVAAMCGIGFTMSMFIASL), and 363-383 (LGTLIGSFIAALVGYFWLSKV).

Belongs to the NhaA Na(+)/H(+) (TC 2.A.33) antiporter family.

The protein resides in the cell inner membrane. It catalyses the reaction Na(+)(in) + 2 H(+)(out) = Na(+)(out) + 2 H(+)(in). Its function is as follows. Na(+)/H(+) antiporter that extrudes sodium in exchange for external protons. This chain is Na(+)/H(+) antiporter NhaA, found in Shewanella sp. (strain W3-18-1).